The following is a 303-amino-acid chain: Propanal dehydrogenase (CoA-propanoylating) (303 aa).

Residue 12–15 (SGNI) participates in NAD(+) binding. C127 serves as the catalytic Acyl-thioester intermediate. NAD(+) is bound by residues 158–166 (SAGPGTRAN) and N277.

Belongs to the acetaldehyde dehydrogenase family. Monomer. Forms a heterotetramer composed of two aldolase (HsaF) and two dehydrogenase (HsaG) subunits.

It catalyses the reaction propanal + NAD(+) + CoA = propanoyl-CoA + NADH + H(+). The enzyme catalyses acetaldehyde + NAD(+) + CoA = acetyl-CoA + NADH + H(+). Functionally, involved in cholesterol degradation. Catalyzes the conversion of propanal to propanoyl-CoA, using NAD(+) and coenzyme A. This chain is Propanal dehydrogenase (CoA-propanoylating), found in Mycobacterium bovis (strain ATCC BAA-935 / AF2122/97).